The sequence spans 348 residues: Glycerol-1-phosphate dehydrogenase [NAD(P)+] (348 aa).

NAD(+) is bound by residues 94-98 (GKPID) and 116-119 (TAAS). Residue D121 coordinates substrate. S125 contributes to the NAD(+) binding site. D168 is a binding site for substrate. Zn(2+)-binding residues include D168 and H248. H252 contributes to the substrate binding site. H264 provides a ligand contact to Zn(2+).

This sequence belongs to the glycerol-1-phosphate dehydrogenase family. Zn(2+) serves as cofactor.

Its subcellular location is the cytoplasm. It catalyses the reaction sn-glycerol 1-phosphate + NAD(+) = dihydroxyacetone phosphate + NADH + H(+). The catalysed reaction is sn-glycerol 1-phosphate + NADP(+) = dihydroxyacetone phosphate + NADPH + H(+). It participates in membrane lipid metabolism; glycerophospholipid metabolism. Catalyzes the NAD(P)H-dependent reduction of dihydroxyacetonephosphate (DHAP or glycerone phosphate) to glycerol 1-phosphate (G1P). The G1P thus generated is used as the glycerophosphate backbone of phospholipids in the cellular membranes of Archaea. This Haloquadratum walsbyi (strain DSM 16790 / HBSQ001) protein is Glycerol-1-phosphate dehydrogenase [NAD(P)+].